The following is an 848-amino-acid chain: MFERFTDRARKVVVLAQEEARMLNHNYIGTEHILLGLIHEGEGVAAKSLESLGISLEGVRSQVEEIIGQGQQAPSGHIPFTPRAKKVLELSLREALQLGHNYIGTEHILLGLIREGEGVAAQVLVKLGAELTRVRQQVIQLLSGYQGKEAAEAGTGGRGGESGSPSTSLVLDQFGRNLTAAAMEGKLDPVIGREKEIERVMQVLSRRTKNNPVLIGEPGVGKTAVVEGLAQAIVHGEVPETLKDKQLYTLDLGSLVAGSRYRGDFEERLKKVLKEINTRGDIILFIDELHTLVGAGAAEGAIDAASILKPKLARGELQTIGATTLDEYRKYIEKDAALERRFQPVQVGEPTVEHTIEILKGLRDRYEAHHRVSITDAAMVAAATLADRYINDRFLPDKAIDLIDEAGARMRIRRMTAPPDLREFDEKIAEARREKESAIDAQDFEKAASLRDREKTLVAQRAEREKQWRSGDLDVVAEVDDEQIAEVLGNWTGIPVFKLTEAETTRLLRMEEELHKRIIGQEDAVKAVSKAIRRTRAGLKDPKRPSGSFIFAGPSGVGKTELSKALANFLFGDDDALIQIDMGEFHDRFTASRLFGAPPGYVGYEEGGQLTEKVRRKPFSVVLFDEIEKAHQEIYNSLLQVLEDGRLTDGQGRTVDFKNTVLIFTSNLGTSDISKPVGLGFSKGGGENDYERMKQKVNDELKKHFRPEFLNRIDDIIVFHQLTREEIIRMVDLMISRVAGQLKSKDMALVLTDAAKALLAKRGFDPVLGARPLRRTIQREIEDQLSEKILFEEVGPGQVVTVDVDNWDGEGPGEDAVFTFTGTRKPPAEPDLAKAGAHSAGGPEPAAR.

Residues 2-144 enclose the Clp R domain; that stretch reads FERFTDRARK…RQQVIQLLSG (143 aa). Repeat regions lie at residues 5–70 and 80–144; these read FTDR…IGQG and FTPR…LLSG. The segment at 171–418 is i; that stretch reads LDQFGRNLTA…RMRIRRMTAP (248 aa). Residue 216-223 coordinates ATP; it reads GEPGVGKT. In terms of domain architecture, UVR spans 425–460; the sequence is DEKIAEARREKESAIDAQDFEKAASLRDREKTLVAQ. The segment at 479 to 670 is II; that stretch reads VDDEQIAEVL…VLIFTSNLGT (192 aa). 553-560 lines the ATP pocket; it reads GPSGVGKT. Residues 821–848 are disordered; sequence TGTRKPPAEPDLAKAGAHSAGGPEPAAR.

Belongs to the ClpA/ClpB family. ClpC subfamily.

Its function is as follows. ATP-dependent specificity component of the Clp protease. It directs the protease to specific substrates. Can perform chaperone functions in the absence of ClpP. The sequence is that of ATP-dependent Clp protease ATP-binding subunit ClpC1 (clpC1) from Mycobacterium tuberculosis (strain CDC 1551 / Oshkosh).